The primary structure comprises 549 residues: Arginine-containing cyclodipeptide synthase amaA (549 aa).

Positions Asp-445–Glu-449 match the Conserved DDXXE motif motif.

This sequence belongs to the arginine-containing cyclodipeptide synthase family.

It carries out the reaction L-prolyl-tRNA(Pro) + L-arginyl-tRNA(Arg) = cyclo(L-arginyl-L-prolyl) + tRNA(Pro) + tRNA(Arg) + 2 H(+). Its pathway is secondary metabolite biosynthesis. Its function is as follows. Arginine-containing cyclodipeptide synthase; part of the cluster that mediates the biosynthesis of a highly modified cyclo-arginine-proline dipeptide (cRP). Within the pathway, amaA acts as the scaffold-generating enzyme and is responsible for formation of the cyclo-Arg-Pro diketopiperazine (cRW) from L-arginyl-tRNA(Arg) + L-prolyl-tRNA(Pro). Additional enzymes from the cluster then further modify the cyclo-Arg-Pro diketopiperazine (cRW) scaffold. This Apiospora montagnei (Sphaeria apiospora) protein is Arginine-containing cyclodipeptide synthase amaA.